The chain runs to 366 residues: Chalcone synthase B (366 aa).

The active site involves C172.

It belongs to the thiolase-like superfamily. Chalcone/stilbene synthases family.

The enzyme catalyses (E)-4-coumaroyl-CoA + 3 malonyl-CoA + 3 H(+) = 2',4,4',6'-tetrahydroxychalcone + 3 CO2 + 4 CoA. Its pathway is secondary metabolite biosynthesis; flavonoid biosynthesis. The primary product of this enzyme is 4,2',4',6'-tetrahydroxychalcone (also termed naringenin-chalcone or chalcone) which can under specific conditions spontaneously isomerize into naringenin. This is Chalcone synthase B (CHSB) from Ipomoea triloba (Trilobed morning glory).